The following is a 218-amino-acid chain: Cytochrome b6 (218 aa).

A helical membrane pass occupies residues 35–55; it reads IFYCLGGITLVCFLIQFATGF. Cysteine 38 serves as a coordination point for heme c. Heme b-binding residues include histidine 89 and histidine 103. The next 3 membrane-spanning stretches (helical) occupy residues 93 to 113, 119 to 139, and 189 to 209; these read ASMM…TGGF, LTWV…VTGY, and LHTF…FLMI. Heme b is bound by residues histidine 190 and histidine 205.

The protein belongs to the cytochrome b family. PetB subfamily. As to quaternary structure, the 4 large subunits of the cytochrome b6-f complex are cytochrome b6, subunit IV (17 kDa polypeptide, PetD), cytochrome f and the Rieske protein, while the 4 small subunits are PetG, PetL, PetM and PetN. The complex functions as a dimer. Heme b is required as a cofactor. Heme c serves as cofactor.

It localises to the cellular thylakoid membrane. Component of the cytochrome b6-f complex, which mediates electron transfer between photosystem II (PSII) and photosystem I (PSI), cyclic electron flow around PSI, and state transitions. The protein is Cytochrome b6 of Prochlorococcus marinus (strain MIT 9301).